The chain runs to 482 residues: Glutamate--tRNA ligase 1 (482 aa).

The 'HIGH' region motif lies at 18-28; it reads PSPTGYLHLGG. The short motif at 252-256 is the 'KMSKS' region element; the sequence is KLSKR. ATP is bound at residue lysine 255.

This sequence belongs to the class-I aminoacyl-tRNA synthetase family. Glutamate--tRNA ligase type 1 subfamily. As to quaternary structure, monomer.

It is found in the cytoplasm. It carries out the reaction tRNA(Glu) + L-glutamate + ATP = L-glutamyl-tRNA(Glu) + AMP + diphosphate. In terms of biological role, catalyzes the attachment of glutamate to tRNA(Glu) in a two-step reaction: glutamate is first activated by ATP to form Glu-AMP and then transferred to the acceptor end of tRNA(Glu). The polypeptide is Glutamate--tRNA ligase 1 (Erythrobacter litoralis (strain HTCC2594)).